Consider the following 505-residue polypeptide: MNSVLSHRLMRPLAAAFVGVITPLAFAPYQFWPLALLSPFILLLLLHQQSAKRAALIAYLWGIGQFAVGISWVHVSIDTFGGMPKIASLFLMTLLVGYLALYPSLFGWLLNRLFPNNSRSKWLCAAPALWLITDWLRGWVMTGFPWLWLGYSQIDSPLANFAPIGGVELITLLLLFCAGSLAYAVLNRRWLMACIPLVVYATGYGLQAMQWVTPQTERTASLALIQGNIEQGLKWLPSQRWPTIMKYTDLTRENWDADVIIWPEAAIPAFEYEISSFLHNLDAAARMNQSAVITGIINQSDDKQYFNSVLTVGDTPHGEYRYDLTQRYHKYHLLPFGEFVPFEEILRPLAPFFNLPMSSFSQGAYVQPNLIAKGFAFVTALCYEIIFNEQVRDNVTPDTDFLLTLSNDAWFGRSIGPLQHMEIARMRALELGKPLIRATNNGVTAVTDERGRIMAQLPQFETGVLKATVTPTRGSTPYFLWGTTPLYLWVGLAAGFAFWRQRRAR.

6 helical membrane-spanning segments follow: residues 15–46, 55–75, 89–109, 129–149, 161–181, and 192–212; these read AAFV…LLLL, ALIA…WVHV, LFLM…FGWL, LWLI…WLWL, FAPI…AGSL, and MACI…MQWV. The CN hydrolase domain maps to 225–471; that stretch reads IQGNIEQGLK…TGVLKATVTP (247 aa). Glutamate 264 (proton acceptor) is an active-site residue. The active site involves lysine 330. The active-site Nucleophile is the cysteine 382. Residues 479-499 traverse the membrane as a helical segment; sequence FLWGTTPLYLWVGLAAGFAFW.

The protein belongs to the CN hydrolase family. Apolipoprotein N-acyltransferase subfamily.

The protein resides in the cell inner membrane. It carries out the reaction N-terminal S-1,2-diacyl-sn-glyceryl-L-cysteinyl-[lipoprotein] + a glycerophospholipid = N-acyl-S-1,2-diacyl-sn-glyceryl-L-cysteinyl-[lipoprotein] + a 2-acyl-sn-glycero-3-phospholipid + H(+). The protein operates within protein modification; lipoprotein biosynthesis (N-acyl transfer). Its function is as follows. Catalyzes the phospholipid dependent N-acylation of the N-terminal cysteine of apolipoprotein, the last step in lipoprotein maturation. The chain is Apolipoprotein N-acyltransferase from Vibrio cholerae serotype O1 (strain ATCC 39315 / El Tor Inaba N16961).